We begin with the raw amino-acid sequence, 128 residues long: Cytochrome c-type biogenesis protein CcmE (128 aa).

Topologically, residues 1-8 (MQKIVRNR) are cytoplasmic. Residues 9 to 29 (LIKIIICFCSACLGISIILYN) form a helical; Signal-anchor for type II membrane protein membrane-spanning segment. At 30 to 128 (LEKNIIFFFP…KHDENYRPPS (99 aa)) the chain is on the periplasmic side. 2 residues coordinate heme: His120 and Tyr124.

This sequence belongs to the CcmE/CycJ family.

Its subcellular location is the cell inner membrane. Its function is as follows. Heme chaperone required for the biogenesis of c-type cytochromes. Transiently binds heme delivered by CcmC and transfers the heme to apo-cytochromes in a process facilitated by CcmF and CcmH. The polypeptide is Cytochrome c-type biogenesis protein CcmE (Rickettsia prowazekii (strain Madrid E)).